A 239-amino-acid chain; its full sequence is Ribosomal RNA small subunit methyltransferase G (239 aa).

S-adenosyl-L-methionine-binding positions include G78, F83, 129 to 130 (AE), and R148.

Belongs to the methyltransferase superfamily. RNA methyltransferase RsmG family.

Its subcellular location is the cytoplasm. Functionally, specifically methylates the N7 position of a guanine in 16S rRNA. The chain is Ribosomal RNA small subunit methyltransferase G from Clostridium botulinum (strain 657 / Type Ba4).